The primary structure comprises 591 residues: Max-binding protein MNT (591 aa).

At serine 2 the chain carries N-acetylserine. 2 disordered regions span residues 17-122 (AQQQ…APRQ) and 182-223 (PGVQ…GIGT). The span at 22–44 (RAREEQERLRLEREREREQEQKR) shows a compositional bias: basic and acidic residues. Composition is skewed to pro residues over residues 63–84 (EAPP…PLAT) and 102–120 (SLPP…PLAP). Residues 205–216 (PAEEAKSSEQKK) show a composition bias toward basic and acidic residues. The region spanning 222 to 273 (GTREVHNKLEKNRRAHLKECFETLKRNIPNVDDKKTSNLSVLRTALRYIQSL) is the bHLH domain. The tract at residues 273–301 (LKRKEKEYEHEMERLAREKIATQQRLAEL) is leucine-zipper. A disordered region spans residues 321–426 (TGQPEDDQAS…PPPATPTQTL (106 aa)). The segment covering 336–346 (EGEDNVDEEME) has biased composition (acidic residues). Residues 374–383 (STAPAPLPTH) are compositionally biased toward pro residues. Positions 390 to 411 (PVALSPAHLPVQQQQPPQQKTP) are enriched in low complexity. Residues 412 to 421 (LPAPPPPPAT) are compositionally biased toward pro residues.

As to quaternary structure, efficient DNA binding requires dimerization with another bHLH protein. Binds DNA as a homodimer or a heterodimer with MAX.

The protein resides in the nucleus. Its function is as follows. Binds DNA as a heterodimer with MAX and represses transcription. Binds to the canonical E box sequence 5'-CACGTG-3' and, with higher affinity, to 5'-CACGCG-3'. In Mus musculus (Mouse), this protein is Max-binding protein MNT (Mnt).